Consider the following 613-residue polypeptide: Transcription factor Sp2 (613 aa).

The tract at residues M1–P32 is disordered. Polar residues predominate over residues A23–P32. The residue at position 78 (S78) is a Phosphoserine. Disordered regions lie at residues S170–G197 and P225–A255. Over residues Q185–G197 the composition is skewed to polar residues. The short motif at G361 to Q369 is the 9aaTAD; inactive element. Residues A374 to A392 show a composition bias toward low complexity. Residues A374 to S402 are disordered. 3 C2H2-type zinc fingers span residues H525–H549, F555–H579, and F585–H607.

This sequence belongs to the Sp1 C2H2-type zinc-finger protein family.

It localises to the nucleus. Binds to GC box promoters elements and selectively activates mRNA synthesis from genes that contain functional recognition sites. In Bos taurus (Bovine), this protein is Transcription factor Sp2 (SP2).